Reading from the N-terminus, the 303-residue chain is MATH domain and coiled-coil domain-containing protein At3g58250 (303 aa).

Residues 8 to 135 (KKKFSWVIKN…KGELKIVVEI (128 aa)) enclose the MATH domain. A coiled-coil region spans residues 231–287 (KLDWLKKKLDQVTQKKEKEAAGETRMHEIGEELKDLKLKCSDLEAQLDKEKADVLAA).

This is MATH domain and coiled-coil domain-containing protein At3g58250 from Arabidopsis thaliana (Mouse-ear cress).